A 215-amino-acid chain; its full sequence is Cytochrome b6 (215 aa).

A helical transmembrane segment spans residues 32–52 (IFYCLGGITLTCFLVQVATGF). Cysteine 35 lines the heme c pocket. Residues histidine 86 and histidine 100 each contribute to the heme b site. Helical transmembrane passes span 90-110 (ASMM…TGGF), 116-136 (LTWV…VTGY), and 186-206 (LHTF…FLMI). Heme b-binding residues include histidine 187 and histidine 202.

The protein belongs to the cytochrome b family. PetB subfamily. As to quaternary structure, the 4 large subunits of the cytochrome b6-f complex are cytochrome b6, subunit IV (17 kDa polypeptide, PetD), cytochrome f and the Rieske protein, while the 4 small subunits are PetG, PetL, PetM and PetN. The complex functions as a dimer. Requires heme b as cofactor. Heme c is required as a cofactor.

Its subcellular location is the plastid. The protein resides in the chloroplast thylakoid membrane. Functionally, component of the cytochrome b6-f complex, which mediates electron transfer between photosystem II (PSII) and photosystem I (PSI), cyclic electron flow around PSI, and state transitions. This Pisum sativum (Garden pea) protein is Cytochrome b6.